Here is an 88-residue protein sequence, read N- to C-terminus: Probable glutaredoxin ssr2061 (88 aa).

Cys-15 and Cys-18 are disulfide-bonded.

It belongs to the glutaredoxin family.

Its function is as follows. Has a glutathione-disulfide oxidoreductase activity in the presence of NADPH and glutathione reductase. Reduces low molecular weight disulfides and proteins. The chain is Probable glutaredoxin ssr2061 from Synechocystis sp. (strain ATCC 27184 / PCC 6803 / Kazusa).